Reading from the N-terminus, the 523-residue chain is Glucose-1-phosphate adenylyltransferase large subunit 1, chloroplastic/amyloplastic (523 aa).

The transit peptide at 1 to 49 (MSSMQFSSVLPLEGKACVSPVRREGSACERLKIGDSSSIRHERASRRMC) directs the protein to the chloroplast.

It belongs to the bacterial/plant glucose-1-phosphate adenylyltransferase family. As to quaternary structure, heterotetramer. In terms of tissue distribution, starchy endosperm and roots.

Its subcellular location is the plastid. The protein resides in the chloroplast. The protein localises to the amyloplast. It catalyses the reaction alpha-D-glucose 1-phosphate + ATP + H(+) = ADP-alpha-D-glucose + diphosphate. It participates in glycan biosynthesis; starch biosynthesis. Its activity is regulated as follows. Highly active without 3'phosphoglycerate, and is only slightly affected by the activator 3'phosphoglycerate and inhibitor orthophosphate. Functionally, this protein plays a role in synthesis of starch. It catalyzes the synthesis of the activated glycosyl donor, ADP-glucose from Glc-1-P and ATP. This Hordeum vulgare (Barley) protein is Glucose-1-phosphate adenylyltransferase large subunit 1, chloroplastic/amyloplastic.